We begin with the raw amino-acid sequence, 456 residues long: Coenzyme F420 hydrogenase subunit alpha (456 aa).

Ni(2+)-binding residues include Cys-63, Cys-66, Cys-432, and Cys-435.

The protein belongs to the [NiFe]/[NiFeSe] hydrogenase large subunit family. In terms of assembly, pentamer of two alpha chains, two beta chains and a gamma chain. Requires Ni(2+) as cofactor. The cofactor is iron-sulfur cluster. It depends on FAD as a cofactor.

The protein localises to the cell membrane. The enzyme catalyses oxidized coenzyme F420-(gamma-L-Glu)(n) + H2 + H(+) = reduced coenzyme F420-(gamma-L-Glu)(n). Functionally, reduces the physiological low-potential two-electron acceptor coenzyme F420, and the artificial one-electron acceptor methylviologen. This Methanosarcina barkeri (strain Fusaro / DSM 804) protein is Coenzyme F420 hydrogenase subunit alpha (frhA).